A 276-amino-acid polypeptide reads, in one-letter code: Octanoyltransferase LipM (276 aa).

A BPL/LPL catalytic domain is found at 31–246 (GKVPPTVRFY…GFASGLEVEL (216 aa)). Cys-148 (acyl-thioester intermediate) is an active-site residue.

It belongs to the octanoyltransferase LipM family. Monomer.

It catalyses the reaction octanoyl-[ACP] + L-lysyl-[protein] = N(6)-octanoyl-L-lysyl-[protein] + holo-[ACP] + H(+). The protein operates within protein modification; protein lipoylation via endogenous pathway; protein N(6)-(lipoyl)lysine from octanoyl-[acyl-carrier-protein]. In terms of biological role, catalyzes the transfer of endogenously produced octanoic acid from octanoyl-acyl-carrier-protein onto the lipoyl domain of GcvH, an intermediate carrier during protein lipoylation. The protein is Octanoyltransferase LipM of Brevibacillus brevis (strain 47 / JCM 6285 / NBRC 100599).